A 225-amino-acid polypeptide reads, in one-letter code: Transcriptional activator protein CUP2 (225 aa).

A DNA-binding region (copper-fist) is located at residues 1 to 40 (MVVINGVKYACETCIRGHRAAQCTHTDGPLQMIRRKGRPS). The interval 1–108 (MVVINGVKYA…KSKGGSCHRR (108 aa)) is binds copper and DNA. Positions 11, 14, 23, and 25 each coordinate Zn(2+). The required for transcriptional activation stretch occupies residues 109–225 (ANDEAAHVNG…QVSSHNSHSQ (117 aa)).

Its subcellular location is the nucleus. Trans-acting regulatory protein that activates transcription of the CUP1 gene (metallothionein) in response to copper ions. Binds to the CUP1 UAS sequence 5'-GCTTCTTTTCCGCTGA-3'. Binds DNA only in presence of copper or silver. Copper seems to alter the conformation of the protein. The protein is Transcriptional activator protein CUP2 (CUP2) of Saccharomyces cerevisiae (strain ATCC 204508 / S288c) (Baker's yeast).